Consider the following 716-residue polypeptide: Protein C-mannosyl-transferase DPY19L3 (716 aa).

The Cytoplasmic portion of the chain corresponds to 1 to 43 (MMSIRQRREIRATEVSEDFPAQEENVKLENKLPSGCTSRRLWK). Residues 44 to 64 (ILSLTIGGTIALCIGLLTSVY) form a helical membrane-spanning segment. The Lumenal segment spans residues 65–154 (LATLHENDLW…RVLPVQKYLE (90 aa)). N118 carries an N-linked (GlcNAc...) asparagine glycan. The helical transmembrane segment at 155–182 (PVYFYIYTLFGLQAIYVTALYITSWLLS) threads the bilayer. At 183 to 184 (GT) the chain is on the cytoplasmic side. An intramembrane region (name=3) is located at residues 185 to 197 (WLSGLLAAFWYVT). The Cytoplasmic segment spans residues 198 to 215 (NRIDTTRVEFTIPLRENW). Residues 216 to 230 (ALPFFAIQIAAITYF) constitute an intramembrane region (name=4). At 231–239 (LRPNLQPLS) the chain is on the cytoplasmic side. A helical transmembrane segment spans residues 240-256 (ERLTLLAIFISTFLFSL). Over 257-262 (TWQFNQ) the chain is Lumenal. The chain crosses the membrane as a helical span at residues 263–279 (FMMLMQALVLFTLDSLD). The Cytoplasmic segment spans residues 280–289 (MLPAVKATWL). The chain crosses the membrane as a helical span at residues 290–306 (YGIQITSLLLVCILQFF). The Lumenal portion of the chain corresponds to 307 to 308 (NS). A helical transmembrane segment spans residues 309-323 (MILGSLLISFNLSVF). The Cytoplasmic segment spans residues 324 to 338 (IARKLQKNLKTGSFL). Residues 339-359 (NRLGKLLLHLFMVLCLTLFLN) traverse the membrane as a helical segment. At 360–414 (NIIKKILNLKSDEHIFKFLKAKFGLGATRDFDANLYLCEEAFGLLPFNTFGRLSD) the chain is on the lumenal side. Residues 415–437 (TLLFYAYIFVLSITVIVAFVVAF) form a helical membrane-spanning segment. At 438-465 (HNLSDSTNQQSVGKMEKGTVDLKPETAY) the chain is on the cytoplasmic side. The helical transmembrane segment at 466-485 (NLIHTILFGFLALSTMRMKY) threads the bilayer. Residues 486–487 (LW) are Lumenal-facing. A helical membrane pass occupies residues 488–499 (TSHMCVFASFGL). Residues 500–522 (CSPEIWELLLKSVHLYNPKRICI) lie on the Cytoplasmic side of the membrane. A helical membrane pass occupies residues 523–539 (MRYSVPILILLYLCYKF). The Lumenal portion of the chain corresponds to 540 to 716 (WPGMMDELSE…FHVYKLSRNK (177 aa)). An N-linked (GlcNAc...) asparagine glycan is attached at N704.

It belongs to the dpy-19 family.

Its subcellular location is the endoplasmic reticulum membrane. It carries out the reaction L-tryptophyl-[protein] + a di-trans,poly-cis-dolichyl beta-D-mannosyl phosphate = C-alpha-D-mannosyl-L-tryptophyl-[protein] + a di-trans,poly-cis-dolichyl phosphate + H(+). Its pathway is protein modification; protein glycosylation. Functionally, C-mannosyltransferase that mediates C-mannosylation of tryptophan residues on target proteins. The reaction occurs on the luminal side of the endoplasmic reticulum and involves the transfer of a mannose unit from a dolichylphosphate mannose (Dol-P-Man) donor to an acceptor protein containing a WxxW or WxxC consensus sequence. C-mannosylates RSPO1, a Wnt signaling regulator, preferentially at the first Trp residue in the sequence WxxW. C-mannosylates the netrin receptor UNC5A, preferentially at the third tryptophan of WxxWxxWxxC sequence. This Pongo abelii (Sumatran orangutan) protein is Protein C-mannosyl-transferase DPY19L3 (DPY19L3).